The chain runs to 393 residues: 8-amino-7-oxononanoate synthase (393 aa).

Arg-18 lines the substrate pocket. 105 to 106 (GY) contacts pyridoxal 5'-phosphate. A substrate-binding site is contributed by His-130. Pyridoxal 5'-phosphate-binding residues include Ser-178, His-206, and Thr-234. N6-(pyridoxal phosphate)lysine is present on Lys-237. Thr-353 serves as a coordination point for substrate.

This sequence belongs to the class-II pyridoxal-phosphate-dependent aminotransferase family. BioF subfamily. In terms of assembly, homodimer. The cofactor is pyridoxal 5'-phosphate.

It catalyses the reaction 6-carboxyhexanoyl-[ACP] + L-alanine + H(+) = (8S)-8-amino-7-oxononanoate + holo-[ACP] + CO2. Its pathway is cofactor biosynthesis; biotin biosynthesis. In terms of biological role, catalyzes the decarboxylative condensation of pimeloyl-[acyl-carrier protein] and L-alanine to produce 8-amino-7-oxononanoate (AON), [acyl-carrier protein], and carbon dioxide. In Geotalea daltonii (strain DSM 22248 / JCM 15807 / FRC-32) (Geobacter daltonii), this protein is 8-amino-7-oxononanoate synthase.